Reading from the N-terminus, the 138-residue chain is Nucleoside diphosphate kinase (138 aa).

ATP is bound by residues lysine 9, phenylalanine 57, arginine 85, threonine 91, arginine 102, and asparagine 112. Residue histidine 115 is the Pros-phosphohistidine intermediate of the active site.

This sequence belongs to the NDK family. Mg(2+) serves as cofactor.

It is found in the cytoplasm. It carries out the reaction a 2'-deoxyribonucleoside 5'-diphosphate + ATP = a 2'-deoxyribonucleoside 5'-triphosphate + ADP. It catalyses the reaction a ribonucleoside 5'-diphosphate + ATP = a ribonucleoside 5'-triphosphate + ADP. Functionally, major role in the synthesis of nucleoside triphosphates other than ATP. The ATP gamma phosphate is transferred to the NDP beta phosphate via a ping-pong mechanism, using a phosphorylated active-site intermediate. This Picrophilus torridus (strain ATCC 700027 / DSM 9790 / JCM 10055 / NBRC 100828 / KAW 2/3) protein is Nucleoside diphosphate kinase.